Reading from the N-terminus, the 282-residue chain is MQEIFLCSISNVRSGDCKEDCAYCTQSSHHQGAIKRYKFKDEKVVLQEARALRELGALGFCLVTSGRELDDEKCEYIAKLAKAINQEELGLHLIACCGRADLEQLEFLRDAGIHSYNHNLETSQNFFPKICSTHTWEERFITCENALRAGLGLCSGGIFGLNESWEDRIEMLRALASLSPHTTPINFFIKNPVLPIDTETLSADEALECVLLAKEFLPNARLMVAGGREVVFKDNDKKEAKLFEYGINAVVLGDYLTTKGKAPKKDIEKLLSYGLTMATSCH.

A Radical SAM core domain is found at 1–228; the sequence is MQEIFLCSIS…NARLMVAGGR (228 aa). Cys17, Cys21, and Cys24 together coordinate [4Fe-4S] cluster. Residues Cys61, Cys96, Cys154, and Arg221 each coordinate [2Fe-2S] cluster.

The protein belongs to the radical SAM superfamily. Biotin synthase family. As to quaternary structure, homodimer. [4Fe-4S] cluster serves as cofactor. [2Fe-2S] cluster is required as a cofactor.

The catalysed reaction is (4R,5S)-dethiobiotin + (sulfur carrier)-SH + 2 reduced [2Fe-2S]-[ferredoxin] + 2 S-adenosyl-L-methionine = (sulfur carrier)-H + biotin + 2 5'-deoxyadenosine + 2 L-methionine + 2 oxidized [2Fe-2S]-[ferredoxin]. Its pathway is cofactor biosynthesis; biotin biosynthesis; biotin from 7,8-diaminononanoate: step 2/2. Functionally, catalyzes the conversion of dethiobiotin (DTB) to biotin by the insertion of a sulfur atom into dethiobiotin via a radical-based mechanism. This is Biotin synthase from Helicobacter pylori (strain Shi470).